We begin with the raw amino-acid sequence, 322 residues long: tRNA uridine(34) hydroxylase (322 aa).

The Rhodanese domain occupies 125-219; sequence QSPDTVVIDA…YGKDPEVQGK (95 aa). The Cysteine persulfide intermediate role is filled by cysteine 179.

This sequence belongs to the TrhO family.

The enzyme catalyses uridine(34) in tRNA + AH2 + O2 = 5-hydroxyuridine(34) in tRNA + A + H2O. Catalyzes oxygen-dependent 5-hydroxyuridine (ho5U) modification at position 34 in tRNAs. In Bacillus pumilus (strain SAFR-032), this protein is tRNA uridine(34) hydroxylase.